Consider the following 192-residue polypeptide: Probable apo-citrate lyase phosphoribosyl-dephospho-CoA transferase (192 aa).

It belongs to the CitX family.

The catalysed reaction is apo-[citrate lyase ACP] + 2'-(5''-triphospho-alpha-D-ribosyl)-3'-dephospho-CoA = holo-[citrate lyase ACP] + diphosphate. Transfers 2-(5''-triphosphoribosyl)-3'-dephosphocoenzyme-A on a serine residue to the apo-acyl carrier protein (gamma chain) of the citrate lyase to yield holo-acyl carrier protein. The chain is Probable apo-citrate lyase phosphoribosyl-dephospho-CoA transferase from Streptococcus pyogenes serotype M6 (strain ATCC BAA-946 / MGAS10394).